A 239-amino-acid polypeptide reads, in one-letter code: Increased recombination centers protein 22-2 (239 aa).

The N-terminal stretch at 1 to 19 is a signal peptide; it reads MKLSTIFTAFAATIATVAG. Residues 20-161 lie on the Lumenal side of the membrane; sequence YETTGSKQTV…AAVSFFDPRL (142 aa). A helical transmembrane segment spans residues 162-182; sequence IFLELVLLITFAGLIYVGYEI. At 183-239 the chain is on the cytoplasmic side; the sequence is WGKQYFKGVAPVKAKKVSAAKASSPVASGPSTTSATGYDTNWIPESHLKQKKTKKVN. Over residues 201–213 the composition is skewed to low complexity; it reads AAKASSPVASGPS. The interval 201-222 is disordered; sequence AAKASSPVASGPSTTSATGYDT.

This sequence belongs to the IRC22 family.

The protein resides in the endoplasmic reticulum membrane. In terms of biological role, is probably involved in a pathway contributing to genomic integrity. The sequence is that of Increased recombination centers protein 22-2 (IRC22-2) from Candida albicans (strain WO-1) (Yeast).